The primary structure comprises 268 residues: 3-methyl-2-oxobutanoate hydroxymethyltransferase (268 aa).

The Mg(2+) site is built by D44 and D83. 3-methyl-2-oxobutanoate-binding positions include 44-45 (DS), D83, and K113. E115 is a Mg(2+) binding site. E182 acts as the Proton acceptor in catalysis.

This sequence belongs to the PanB family. Homodecamer; pentamer of dimers. Mg(2+) is required as a cofactor.

Its subcellular location is the cytoplasm. The catalysed reaction is 3-methyl-2-oxobutanoate + (6R)-5,10-methylene-5,6,7,8-tetrahydrofolate + H2O = 2-dehydropantoate + (6S)-5,6,7,8-tetrahydrofolate. It functions in the pathway cofactor biosynthesis; (R)-pantothenate biosynthesis; (R)-pantoate from 3-methyl-2-oxobutanoate: step 1/2. In terms of biological role, catalyzes the reversible reaction in which hydroxymethyl group from 5,10-methylenetetrahydrofolate is transferred onto alpha-ketoisovalerate to form ketopantoate. This is 3-methyl-2-oxobutanoate hydroxymethyltransferase from Synechococcus elongatus (strain ATCC 33912 / PCC 7942 / FACHB-805) (Anacystis nidulans R2).